Consider the following 274-residue polypeptide: Diaminopimelate epimerase (274 aa).

Substrate contacts are provided by Asn11, Gln44, and Asn64. Cys73 acts as the Proton donor in catalysis. Residues 74–75, Asn157, Asn190, and 208–209 contribute to the substrate site; these read GN and ER. The active-site Proton acceptor is the Cys217. Residue 218-219 participates in substrate binding; it reads GS.

The protein belongs to the diaminopimelate epimerase family. Homodimer.

The protein resides in the cytoplasm. It catalyses the reaction (2S,6S)-2,6-diaminopimelate = meso-2,6-diaminopimelate. It functions in the pathway amino-acid biosynthesis; L-lysine biosynthesis via DAP pathway; DL-2,6-diaminopimelate from LL-2,6-diaminopimelate: step 1/1. Catalyzes the stereoinversion of LL-2,6-diaminopimelate (L,L-DAP) to meso-diaminopimelate (meso-DAP), a precursor of L-lysine and an essential component of the bacterial peptidoglycan. This is Diaminopimelate epimerase from Histophilus somni (strain 129Pt) (Haemophilus somnus).